The primary structure comprises 185 residues: MANPILEQAKENMEKAEASLRRTLGQIRAGRANASLVNRVNVEYYGAMTPLNQIAAITIPEARVLLITPYDKGALEDIEKALYTADIGISPANDGSVIRLVIPQLTGERRKEIAKEVGKEAELAKVVVRNARRDAMDNLKKAEKASEISEDEMHDLEEQVQNLTNEATKKIDAISKDKEKEITEG.

The segment at 163 to 185 (LTNEATKKIDAISKDKEKEITEG) is disordered. The segment covering 167–185 (ATKKIDAISKDKEKEITEG) has biased composition (basic and acidic residues).

The protein belongs to the RRF family.

The protein resides in the cytoplasm. In terms of biological role, responsible for the release of ribosomes from messenger RNA at the termination of protein biosynthesis. May increase the efficiency of translation by recycling ribosomes from one round of translation to another. The polypeptide is Ribosome-recycling factor (Latilactobacillus sakei subsp. sakei (strain 23K) (Lactobacillus sakei subsp. sakei)).